Reading from the N-terminus, the 341-residue chain is Cell division protein FtsQ (341 aa).

Topologically, residues 1 to 126 are cytoplasmic; it reads MTETDEGAPV…VARGVVRGLK (126 aa). The helical transmembrane segment at 127–147 threads the bilayer; the sequence is TLFATVMFSIAGFGLGLALYV. Topologically, residues 148 to 341 are extracellular; that stretch reads TPAMSVRNIV…VSSPDLPTVK (194 aa). The POTRA domain occupies 151 to 219; sequence MSVRNIVVTG…SALRITIVER (69 aa).

The protein belongs to the FtsQ/DivIB family. FtsQ subfamily.

The protein resides in the cell membrane. Essential cell division protein. The protein is Cell division protein FtsQ of Mycobacterium leprae (strain Br4923).